The chain runs to 156 residues: Small ribosomal subunit protein uS7 (156 aa).

This sequence belongs to the universal ribosomal protein uS7 family. Part of the 30S ribosomal subunit. Contacts proteins S9 and S11.

Functionally, one of the primary rRNA binding proteins, it binds directly to 16S rRNA where it nucleates assembly of the head domain of the 30S subunit. Is located at the subunit interface close to the decoding center, probably blocks exit of the E-site tRNA. In Symbiobacterium thermophilum (strain DSM 24528 / JCM 14929 / IAM 14863 / T), this protein is Small ribosomal subunit protein uS7.